The sequence spans 555 residues: High-affinity gluconate transporter ght3 (555 aa).

At 1-9 (MNRFITSIL) the chain is on the cytoplasmic side. The helical transmembrane segment at 10–30 (VVFISMSGWLQGADTGSISGI) threads the bilayer. Residues 31–58 (LGMRDFQSRFADRYNPISNSYSYSAWRQ) are Extracellular-facing. A helical membrane pass occupies residues 59 to 79 (ALLTGTINAGCLFGAMLSSPF). At 80–87 (TERIGKKY) the chain is on the cytoplasmic side. Residues 88–108 (SICFFSGVYIIAELLLVTAVP) form a helical membrane-spanning segment. The Extracellular portion of the chain corresponds to 109–112 (SWIQ). Residues 113–133 (VLVGKILAGVGIGALSVLSPG) form a helical membrane-spanning segment. Residues 134 to 144 (YQSEVAPPQIR) lie on the Cytoplasmic side of the membrane. Residues 145-165 (GAVVATYQIFSTGAALVAACI) traverse the membrane as a helical segment. Over 166 to 179 (NMGTHKLRKTASWR) the chain is Extracellular. A helical transmembrane segment spans residues 180–200 (TSFGINMLWGILLMVGVLFLP). The Cytoplasmic portion of the chain corresponds to 201 to 266 (ESPRYLIYKG…IFGKDIRYRT (66 aa)). The helical transmembrane segment at 267-285 (CLGFLVMLFRELIGNNYYF) threads the bilayer. Residues 286-301 (YYATQVFKGTGMTDIF) are Extracellular-facing. A helical transmembrane segment spans residues 302–322 (LPAVILGAINFGTTFGALYTI). Residues 323-328 (DNLGRR) are Cytoplasmic-facing. A helical membrane pass occupies residues 329-349 (NPLIFGAAFQSICFFIYAAVG). Residues 350–363 (DRKLIYKNGTSDHR) are Extracellular-facing. N-linked (GlcNAc...) asparagine glycosylation occurs at N357. The helical transmembrane segment at 364-384 (AGSVMIVFSCLFLFSYCCSWG) threads the bilayer. The Cytoplasmic portion of the chain corresponds to 385–404 (PMGWVIVGETFPIRYRSKCA). The chain crosses the membrane as a helical span at residues 405–425 (SVATSGNWLGNFMISFFTPFI). The Extracellular portion of the chain corresponds to 426 to 432 (NNAIGFK). A helical membrane pass occupies residues 433 to 453 (LGYIYACINLFSSFMIFFLAK). At 454–555 (ETKGLTLEEV…FSEDSHPTYI (102 aa)) the chain is on the cytoplasmic side. Basic and acidic residues predominate over residues 492–509 (KEEEKREREKSKGIRGQE). Residues 492–555 (KEEEKREREK…FSEDSHPTYI (64 aa)) are disordered. Positions 510–521 (EEFIENADEDNN) are enriched in acidic residues. Residues 522 to 534 (DSSSSSGSVVSAV) are compositionally biased toward low complexity. A compositionally biased stretch (basic and acidic residues) spans 545 to 555 (RFSEDSHPTYI).

It belongs to the major facilitator superfamily. Sugar transporter (TC 2.A.1.1) family.

The protein localises to the membrane. High-affinity gluconate transporter. This chain is High-affinity gluconate transporter ght3 (ght3), found in Schizosaccharomyces pombe (strain 972 / ATCC 24843) (Fission yeast).